Here is a 466-residue protein sequence, read N- to C-terminus: tRNA-2-methylthio-N(6)-dimethylallyladenosine synthase (466 aa).

The 117-residue stretch at 2–118 (KRFYIHTIGC…LPGHIQAVAH (117 aa)) folds into the MTTase N-terminal domain. [4Fe-4S] cluster contacts are provided by cysteine 11, cysteine 47, cysteine 81, cysteine 157, cysteine 161, and cysteine 164. The Radical SAM core domain occupies 143–372 (DSSGVTGFIT…LELQNRITAE (230 aa)). A TRAM domain is found at 375 to 453 (RALEGRVEQV…AHSLSGIAVG (79 aa)).

Belongs to the methylthiotransferase family. MiaB subfamily. In terms of assembly, monomer. The cofactor is [4Fe-4S] cluster.

Its subcellular location is the cytoplasm. It catalyses the reaction N(6)-dimethylallyladenosine(37) in tRNA + (sulfur carrier)-SH + AH2 + 2 S-adenosyl-L-methionine = 2-methylsulfanyl-N(6)-dimethylallyladenosine(37) in tRNA + (sulfur carrier)-H + 5'-deoxyadenosine + L-methionine + A + S-adenosyl-L-homocysteine + 2 H(+). Catalyzes the methylthiolation of N6-(dimethylallyl)adenosine (i(6)A), leading to the formation of 2-methylthio-N6-(dimethylallyl)adenosine (ms(2)i(6)A) at position 37 in tRNAs that read codons beginning with uridine. The sequence is that of tRNA-2-methylthio-N(6)-dimethylallyladenosine synthase from Desulfosudis oleivorans (strain DSM 6200 / JCM 39069 / Hxd3) (Desulfococcus oleovorans).